Reading from the N-terminus, the 254-residue chain is Ribonuclease PH (254 aa).

Phosphate is bound by residues Arg-86 and 124–126; that span reads GTR.

The protein belongs to the RNase PH family. In terms of assembly, homohexameric ring arranged as a trimer of dimers.

The catalysed reaction is tRNA(n+1) + phosphate = tRNA(n) + a ribonucleoside 5'-diphosphate. Functionally, phosphorolytic 3'-5' exoribonuclease that plays an important role in tRNA 3'-end maturation. Removes nucleotide residues following the 3'-CCA terminus of tRNAs; can also add nucleotides to the ends of RNA molecules by using nucleoside diphosphates as substrates, but this may not be physiologically important. Probably plays a role in initiation of 16S rRNA degradation (leading to ribosome degradation) during starvation. The protein is Ribonuclease PH of Carboxydothermus hydrogenoformans (strain ATCC BAA-161 / DSM 6008 / Z-2901).